We begin with the raw amino-acid sequence, 425 residues long: Riboflavin biosynthesis protein RibBA (425 aa).

The segment at 1–204 is DHBP synthase; the sequence is MTRLDSVERA…IADLIEWRRK (204 aa). D-ribulose 5-phosphate contacts are provided by residues 28-29, aspartate 33, 141-145, and glutamate 165; these read RE and RPGHT. Residue glutamate 29 participates in Mg(2+) binding. Residue histidine 144 participates in Mg(2+) binding. Residues 205–425 are GTP cyclohydrolase II; that stretch reads HEKHIERIAE…HLPGEFGGAL (221 aa). 259 to 263 lines the GTP pocket; the sequence is RVHSE. The Zn(2+) site is built by cysteine 264, cysteine 275, and cysteine 277. GTP is bound by residues glutamine 280, 303 to 305, and threonine 325; that span reads EGR. Aspartate 337 serves as the catalytic Proton acceptor; for GTP cyclohydrolase activity. Residue arginine 339 is the Nucleophile; for GTP cyclohydrolase activity of the active site. Threonine 360 and lysine 365 together coordinate GTP.

It in the N-terminal section; belongs to the DHBP synthase family. The protein in the C-terminal section; belongs to the GTP cyclohydrolase II family. Mg(2+) is required as a cofactor. The cofactor is Mn(2+). Requires Zn(2+) as cofactor.

It catalyses the reaction D-ribulose 5-phosphate = (2S)-2-hydroxy-3-oxobutyl phosphate + formate + H(+). It carries out the reaction GTP + 4 H2O = 2,5-diamino-6-hydroxy-4-(5-phosphoribosylamino)-pyrimidine + formate + 2 phosphate + 3 H(+). It functions in the pathway cofactor biosynthesis; riboflavin biosynthesis; 2-hydroxy-3-oxobutyl phosphate from D-ribulose 5-phosphate: step 1/1. Its pathway is cofactor biosynthesis; riboflavin biosynthesis; 5-amino-6-(D-ribitylamino)uracil from GTP: step 1/4. Functionally, catalyzes the conversion of D-ribulose 5-phosphate to formate and 3,4-dihydroxy-2-butanone 4-phosphate. Catalyzes the conversion of GTP to 2,5-diamino-6-ribosylamino-4(3H)-pyrimidinone 5'-phosphate (DARP), formate and pyrophosphate. In Mycolicibacterium paratuberculosis (strain ATCC BAA-968 / K-10) (Mycobacterium paratuberculosis), this protein is Riboflavin biosynthesis protein RibBA.